The sequence spans 87 residues: uncharacterized protein (87 aa).

Residues 21 to 41 form a helical membrane-spanning segment; the sequence is LSSSLYSVAFFLFFFPNFLFF.

It is found in the membrane. This is an uncharacterized protein from Saccharomyces cerevisiae (strain ATCC 204508 / S288c) (Baker's yeast).